The following is a 518-amino-acid chain: UNC5C-like protein (518 aa).

The Extracellular segment spans residues 1-10 (MSPQESSVQP). Residues 11–31 (SQFLLLVGIPVASALLLAQCL) form a helical; Signal-anchor for type III membrane protein membrane-spanning segment. The Cytoplasmic portion of the chain corresponds to 32-518 (RWHCCQWLPG…NHGLELDEKL (487 aa)). A ZU5 domain is found at 102–237 (VFSAREVDHR…FSLYTCVLEA (136 aa)). Positions 186–400 (QQPSQACAYS…ETWAVPPPVS (215 aa)) are interaction with RELA and NFKB1. The segment at 208–235 (PLGQPGTHISRDECRILLSHFSLYTCVL) is peptidase S68. Active-site residues include histidine 227 and serine 229. Residues 415 to 494 (QLQMLLEPNS…SAIQNYLNRS (80 aa)) enclose the Death domain.

The protein belongs to the unc-5 family. In terms of assembly, interacts with p65/RELA and NFKB1.

The protein resides in the membrane. The protein localises to the cytoplasm. Its function is as follows. Inhibits NF-kappa-B-dependent transcription by impairing NF-kappa-B binding to its targets. The protein is UNC5C-like protein (Unc5cl) of Mus musculus (Mouse).